Reading from the N-terminus, the 458-residue chain is Mitochondrial distribution and morphology protein 10 (458 aa).

The disordered stretch occupies residues Leu307–Asp339. A compositionally biased stretch (basic and acidic residues) spans Ser326 to Asp339.

The protein belongs to the MDM10 family. Component of the ER-mitochondria encounter structure (ERMES) or MDM complex, composed of MMM1, MDM10, MDM12 and MDM34. Associates with the mitochondrial outer membrane sorting assembly machinery SAM(core) complex.

Its subcellular location is the mitochondrion outer membrane. In terms of biological role, component of the ERMES/MDM complex, which serves as a molecular tether to connect the endoplasmic reticulum and mitochondria. Components of this complex are involved in the control of mitochondrial shape and protein biogenesis and may function in phospholipid exchange. MDM10 is involved in the late assembly steps of the general translocase of the mitochondrial outer membrane (TOM complex). Functions in the TOM40-specific route of the assembly of outer membrane beta-barrel proteins, including the association of TOM40 with the receptor TOM22 and small TOM proteins. Can associate with the SAM(core) complex as well as the MDM12-MMM1 complex, both involved in late steps of the major beta-barrel assembly pathway, that is responsible for biogenesis of all outer membrane beta-barrel proteins. May act as a switch that shuttles between both complexes and channels precursor proteins into the TOM40-specific pathway. Plays a role in mitochondrial morphology and in the inheritance of mitochondria. The chain is Mitochondrial distribution and morphology protein 10 from Lachancea thermotolerans (strain ATCC 56472 / CBS 6340 / NRRL Y-8284) (Yeast).